Here is a 392-residue protein sequence, read N- to C-terminus: Gastricsin (392 aa).

The signal sequence occupies residues 1-16 (MKWMVVALLCLPLLEA). The propeptide at 17-62 (SLLRVPLRKMKSIRETMKEQGVLKDFLKTHKYDPGQKYHFGNFGDY) is activation peptide. One can recognise a Peptidase A1 domain in the interval 76 to 389 (YFGEISIGTP…DMGNNKVGLA (314 aa)). Asp-94 is a catalytic residue. 2 disulfides stabilise this stretch: Cys-107-Cys-112 and Cys-270-Cys-275. Residue Asp-280 is part of the active site. A disulfide bridge links Cys-314 with Cys-347.

Belongs to the peptidase A1 family.

The protein localises to the secreted. The enzyme catalyses More restricted specificity than pepsin A, but shows preferential cleavage at Tyr-|-Xaa bonds. High activity on hemoglobin.. Its function is as follows. Hydrolyzes a variety of proteins. This Rattus norvegicus (Rat) protein is Gastricsin (Pgc).